The following is a 217-amino-acid chain: MNTEQFDPMTFALFLGALSLIPMLMIVCTCFLKISMVLLITRNAIGVQQVPPNMALYGIALAATLFVMAPVFNQMQQQFSQVPADLSSMDNLKTSVTNGVAPLQKFMTHNTDPDILIHLQENSVRMWPKEMSDSVNKDNLLLVIPAFVLSELQAGFKIGFLIYIPFIVIDLIVSNVLLALGMQMVAPMTLSLPLKMLLFVLINGWTRLLDGLFYSYL.

Transmembrane regions (helical) follow at residues F11–F31, P52–F72, I158–L178, and V185–W205.

It belongs to the FliP/MopC/SpaP family.

The protein localises to the cell membrane. In terms of biological role, required for the secretion of harpin. This Erwinia amylovora (Fire blight bacteria) protein is Harpin secretion protein HrcR (hrcR).